The sequence spans 311 residues: Putative mitochondrial transporter UCP3 (311 aa).

At 1-10 the chain is on the mitochondrial intermembrane side; sequence MVGLQPSERP. A helical transmembrane segment spans residues 11–32; sequence PTTSVKFLAAGTAACFADLLTF. Solcar repeat units follow at residues 11–105, 114–205, and 214–299; these read PTTS…VKQF, SSII…IKEK, and DNFP…MKRA. At 33 to 76 the chain is on the mitochondrial matrix side; sequence PLDTAKVRLQIQGENQAALAARSAQYRGVLGTILTMVRTEGPRS. The chain crosses the membrane as a helical span at residues 77–99; sequence LYSGLVAGLQRQMSFASIRIGLY. Over 100 to 119 the chain is Mitochondrial intermembrane; that stretch reads DSVKQFYTPKGSDHSSIITR. A helical transmembrane segment spans residues 120–136; it reads ILAGCTTGAMAVTCAQP. The Mitochondrial matrix segment spans residues 137–182; sequence TDVVKIRFQASMHTGLGGNRKYSGTMDAYRTIAREEGVRGLWKGIL. The chain crosses the membrane as a helical span at residues 183 to 199; sequence PNITRNAIVNCGEMVTY. Over 200-216 the chain is Mitochondrial intermembrane; the sequence is DIIKEKLLDYHLLTDNF. Residues 217-236 traverse the membrane as a helical segment; sequence PCHFVSAFGAGFCATLVASP. The Mitochondrial matrix segment spans residues 237–270; it reads VDVVKTRYMNSPPGQYHSPFDCMLKMVTQEGPTA. A helical transmembrane segment spans residues 271-293; that stretch reads FYKGFTPSFLRLGSWNVVMFVTY. The tract at residues 278-300 is purine nucleotide binding; it reads SFLRLGSWNVVMFVTYEQMKRAL. Residues 294–311 are Mitochondrial intermembrane-facing; it reads EQMKRALMKVQMLRDSPF.

This sequence belongs to the mitochondrial carrier (TC 2.A.29) family. Interacts with HAX1; the interaction is direct and calcium-dependent.

The protein resides in the mitochondrion inner membrane. Functionally, putative transmembrane transporter that plays a role in mitochondrial metabolism via an as yet unclear mechanism. Originally, this mitochondrial protein was thought to act as a proton transmembrane transporter from the mitochondrial intermembrane space into the matrix, causing proton leaks through the inner mitochondrial membrane, thereby uncoupling mitochondrial membrane potential generation from ATP synthesis. However, this function is controversial and uncoupling may not be the function, or at least not the main function, but rather a consequence of more conventional metabolite transporter activity. The polypeptide is Putative mitochondrial transporter UCP3 (Bos taurus (Bovine)).